A 297-amino-acid chain; its full sequence is CASP-like protein 4A2 (297 aa).

Polar residues predominate over residues 1 to 20 (MKMKRTASSNSEAQSYNESP). Residues 1-135 (MKMKRTASSN…PINGEESTRT (135 aa)) are disordered. The Cytoplasmic segment spans residues 1-149 (MKMKRTASSN…ARGDDLVSLT (149 aa)). Pro residues predominate over residues 69–83 (LPSPIPPPPPQFPPP). The chain crosses the membrane as a helical span at residues 150–170 (ALGFRITEVILCVISFSIMAA). Residues 171–191 (DKTQGWSGDSYDRYKEYRYCL) lie on the Extracellular side of the membrane. The chain crosses the membrane as a helical span at residues 192 to 212 (AVNVIAFVYSAFEACDAACYI). Over 213-225 (AKESYMINCGFHD) the chain is Cytoplasmic. Residues 226-246 (LFVFSMDQLLAYLLMSASSCA) traverse the membrane as a helical segment. The Extracellular segment spans residues 247-265 (ATRVDDWVSNWGKDEFTQM). The chain crosses the membrane as a helical span at residues 266–286 (ATASIAVSFLAFGAFAVSALI). The Cytoplasmic segment spans residues 287-297 (SSYRLFTHASS).

This sequence belongs to the Casparian strip membrane proteins (CASP) family. As to quaternary structure, homodimer and heterodimers.

It localises to the cell membrane. The protein is CASP-like protein 4A2 of Arabidopsis thaliana (Mouse-ear cress).